The sequence spans 280 residues: Monoacylglycerol lipase (280 aa).

Serine 111 functions as the Nucleophile in the catalytic mechanism. Residues aspartate 227 and histidine 257 each act as charge relay system in the active site.

This sequence belongs to the AB hydrolase superfamily.

The protein resides in the secreted. Its subcellular location is the cell wall. It catalyses the reaction Hydrolyzes glycerol monoesters of long-chain fatty acids.. In terms of biological role, contributes to cell growth, probably by hydrolyzing exogenous lipids. Catalyzes the hydrolysis of monoacylglycerols (MAG) with fatty acid chains ranging from C14 to C18, with a maximum activity on monoolein. Is unable to hydrolyze long-chain diacylglycerol (DAG). This Mycolicibacterium smegmatis (strain ATCC 700084 / mc(2)155) (Mycobacterium smegmatis) protein is Monoacylglycerol lipase.